Consider the following 291-residue polypeptide: N-acetylmannosamine kinase (291 aa).

ATP is bound by residues 5 to 12 (AIDIGGTK) and 132 to 139 (GVGGGVVS). Residues His156, Cys166, Cys168, and Cys173 each contribute to the Zn(2+) site.

This sequence belongs to the ROK (NagC/XylR) family. NanK subfamily. As to quaternary structure, homodimer.

The catalysed reaction is an N-acyl-D-mannosamine + ATP = an N-acyl-D-mannosamine 6-phosphate + ADP + H(+). The protein operates within amino-sugar metabolism; N-acetylneuraminate degradation; D-fructose 6-phosphate from N-acetylneuraminate: step 2/5. Functionally, catalyzes the phosphorylation of N-acetylmannosamine (ManNAc) to ManNAc-6-P. The sequence is that of N-acetylmannosamine kinase from Escherichia coli O9:H4 (strain HS).